The sequence spans 359 residues: Salicylate carboxymethyltransferase (359 aa).

An S-adenosyl-L-methionine-binding site is contributed by Tyr-18. Residues Tyr-18, 21 to 25 (NSFIQ), and Gln-25 contribute to the substrate site. Residues Gly-59, 59–60 (GC), 59–61 (GCS), Asn-65, 96–99 (LNDL), Asp-98, 129–131 (SFY), and 146–148 (SYS) contribute to the S-adenosyl-L-methionine site. Substrate-binding positions include 147–151 (YSLMW) and Trp-151. Residues Asn-162, Asp-248, Phe-250, and Asn-251 each coordinate Mg(2+). Residue Tyr-255 coordinates substrate.

Belongs to the methyltransferase superfamily. SABATH family.

The enzyme catalyses salicylate + S-adenosyl-L-methionine = methyl salicylate + S-adenosyl-L-homocysteine. Functionally, catalyzes the methylation of the free carboxyl end of the plant hormone salicylic acid (SA). Converts SA to SA methyl ester (MSA). The volatile compound MSA is hypothesized to act as an airborne signal that triggers defense responses in uninfected plants. MSA is an important chemoattractant for moth pollinated flowering plants. This Clarkia breweri (Fairy fans) protein is Salicylate carboxymethyltransferase (SAMT).